Here is a 193-residue protein sequence, read N- to C-terminus: dTTP/UTP pyrophosphatase (193 aa).

D71 serves as the catalytic Proton acceptor.

The protein belongs to the Maf family. YhdE subfamily. A divalent metal cation is required as a cofactor.

The protein resides in the cytoplasm. It catalyses the reaction dTTP + H2O = dTMP + diphosphate + H(+). The enzyme catalyses UTP + H2O = UMP + diphosphate + H(+). Nucleoside triphosphate pyrophosphatase that hydrolyzes dTTP and UTP. May have a dual role in cell division arrest and in preventing the incorporation of modified nucleotides into cellular nucleic acids. This chain is dTTP/UTP pyrophosphatase, found in Geobacter sp. (strain M21).